The primary structure comprises 484 residues: UDP-N-acetylmuramate--L-alanine ligase (484 aa).

Position 128 to 134 (128 to 134 (GTHGKTT)) interacts with ATP.

Belongs to the MurCDEF family.

It localises to the cytoplasm. The catalysed reaction is UDP-N-acetyl-alpha-D-muramate + L-alanine + ATP = UDP-N-acetyl-alpha-D-muramoyl-L-alanine + ADP + phosphate + H(+). Its pathway is cell wall biogenesis; peptidoglycan biosynthesis. In terms of biological role, cell wall formation. This chain is UDP-N-acetylmuramate--L-alanine ligase, found in Shewanella loihica (strain ATCC BAA-1088 / PV-4).